The following is a 224-amino-acid chain: UPF0502 protein Psyr_2419 (224 aa).

Belongs to the UPF0502 family.

The protein is UPF0502 protein Psyr_2419 of Pseudomonas syringae pv. syringae (strain B728a).